The primary structure comprises 388 residues: MTTISDLSDDLVGDILSRVPFTSLISVRSTCKKWNALSKNQIFGRKTAARNQFLEFMILDSRVCSLRLDLQGIRNEDKEDFVDPSMKLISIPSNDDQVEISQVYHCDGLLLCIAKENSNVFVWNPYLGQTKWIRPRNTFHRYDRFALGYDNNRNHKILRFLYDEESNESSRRTHIDVYDFSSDSWRVLDVNPDCDIPFYQTGVSLKGNTYFFGQEVTQATKVTEIETCLLCFDFTTERFGPCLPLLFYPPCPSFETVTLSWVRDEKLAVLYNHYVTAEIIEIRISTKIEPNAVSWSSFLTVDMSLVNGLPDHFSMYFEAKSFFIDEEKKVVVLFDSKEIKTCRYQMAYIVGDDGYFKSVNIGVSPNSQRKPGRLVCSSYVPSLVQLQD.

Residues 1–47 form the F-box domain; that stretch reads MTTISDLSDDLVGDILSRVPFTSLISVRSTCKKWNALSKNQIFGRKT.

The polypeptide is F-box protein At3g49510 (Arabidopsis thaliana (Mouse-ear cress)).